The chain runs to 458 residues: MLSMSSMDPWPEGSVGLEEEVVTAAAQAERLDTSTPLQCNTSLDSDNLDDSLTSLQWLQEFSILNASTGQHTSPSSHSHLMGSDAPSSPLAGDPASIGMPLTPGKPTAASFCRVPMFSALPSLVAHGHCPDEVDYKSNPHIKPPYSYATLICMAMQASKKTKITLSCIYKWITDNFCYFRHADPTWQNSIRHNLSLNKCFIKVPRQKDEPGKGGFWKIDPQYAERLLNGAYKKRRLPPVQINPALQHRLRMNAQATGVISRNLSVSPESQQLLKDFEEATSADQNWDPRLAEATMLSCWISGKGTNKRKQPYNHRTGKTPRRSSSPLLVMDEQEDLSSLRGNFDWDALLDSALNGELSLNEGSPLSPTPQDEELMIRGTHISPQEAPVENHVLMETQRSGDEDFDEETFLATAFLQSPWSEVDESNRSDFLGSSTVSIDQLFDLSFGGDLSSKIETLL.

Over residues 68–78 the composition is skewed to polar residues; it reads TGQHTSPSSHS. The tract at residues 68 to 99 is disordered; sequence TGQHTSPSSHSHLMGSDAPSSPLAGDPASIGM. Residues 142–236 constitute a DNA-binding region (fork-head); the sequence is KPPYSYATLI…LNGAYKKRRL (95 aa). Over residues 305-321 the composition is skewed to basic residues; sequence TNKRKQPYNHRTGKTPR. A disordered region spans residues 305-324; sequence TNKRKQPYNHRTGKTPRRSS.

The protein belongs to the FOXJ1 family. As to expression, expressed in floor plate, dorsal forerunner cells, Kupffers vesicle, the floor plate, pronephric ducts and kidney.

It is found in the nucleus. Its function is as follows. Key transcription factor required for motile ciliogenesis. Activates genes essential for motile cilia formation and function. Its activity is sufficient for ectopic development of cilia that resemble motile cilia. This chain is Forkhead box protein J1-A, found in Danio rerio (Zebrafish).